A 392-amino-acid chain; its full sequence is Pannexin-3 (392 aa).

Residues 1–39 (MSLAHTAAEYMLSDALLPDRRGSRLKGLRLELPLDKMVK) are Cytoplasmic-facing. Residues 40 to 60 (FVTVGFPLLLMSLAFAQEFSS) traverse the membrane as a helical segment. The Extracellular segment spans residues 61–113 (GSPISCFSPSNFSVRQAVFVDSSCWDSLAHYKQDEAGQYTVKSLWPHKALPYS). An N-linked (GlcNAc...) asparagine glycan is attached at asparagine 71. A helical membrane pass occupies residues 114-134 (LLALAVAMYLPVLLWQYAAVP). Residues 135-215 (ALSSDLLFII…VATYLLRNAL (81 aa)) are Cytoplasmic-facing. A helical membrane pass occupies residues 216–236 (LLLFTSATYLYLGHFHLDVFF). Topologically, residues 237 to 267 (QEEFSCSIKTGLLHEETHVPELITCRLTSLS) are extracellular. The helical transmembrane segment at 268–288 (VFQIVSVSSVAIYTVLVPVII) threads the bilayer. Over 289 to 392 (YNLTRLCRWD…LTQHTYDEHP (104 aa)) the chain is Cytoplasmic.

Belongs to the pannexin family. As to quaternary structure, homoheptameric. Skin.

It localises to the cell membrane. Its subcellular location is the cell junction. It is found in the gap junction. The protein localises to the endoplasmic reticulum membrane. The enzyme catalyses Ca(2+)(in) = Ca(2+)(out). It catalyses the reaction ATP(in) = ATP(out). Regulator of osteoblast differentiation by functionning as a Ca(2+) channel in the endoplasmic reticulum which regulates calmodulin (CaM) pathways. Allows ATP release into the extracellular space and activation or purinergic receptors. This chain is Pannexin-3 (Panx3), found in Rattus norvegicus (Rat).